A 70-amino-acid chain; its full sequence is VVYQINEVIAIYPITPSSPMAEWADAWASEGKPNIWGTVPTVVQMQSEGGVAGAVHGALQTGSLTTTFTA.

This sequence belongs to the pyruvate:ferredoxin/flavodoxin oxidoreductase family.

It carries out the reaction oxidized [flavodoxin] + pyruvate + CoA + 2 H(+) = reduced [flavodoxin] + acetyl-CoA + CO2. Oxidoreductase required for the transfer of electrons from pyruvate to flavodoxin, which reduces nitrogenase. The protein is Pyruvate-flavodoxin oxidoreductase (nifJ) of Anabaena variabilis.